Reading from the N-terminus, the 510-residue chain is MSKSPVAIIILDGFGKRAETVGNAVAQANKPNFDRYWANFPHGELKAAGLDVGLPEGQMGNSEVGHTNIGAGRIVYQSLTRIDKAIEEGEFQENKALNNAFTHTKENNSDLHLFGLLSDGGVHSHINHLVALLETAKDKGVKNVYIHAFLDGRDVAPQSSLEYLETLQKAISDLNYGAIATVSGRFYAMDRDKRWERVEKAYKAIVNAEGEKFEDPIELVKASYANDKNDEFVVPAIITKDGKPVATVKDNDAVIFFNFRPDRAIQLSNAFTDKEWDHFDRGANHPKNIKFVTMTLYNPSIDAEVAFEPIEMKNVIGEVLSNEGLSQLRIAETEKYPHVTFFMNGGRNEEFPGENRILINSPKVETYDLQPEMSAYEVTDALVEDIKNDKHDAIILNFANPDMVGHSGMLEPTIKAIEAVDENLGRVVDLILEKGGSAIIFADHGNSETMSTPEGKPHTAHTTVPVPVIVTKKGVTLREGGRLADVAPTMLDLLGVKKPAEMTGESLIQK.

Residues aspartate 12 and serine 62 each coordinate Mn(2+). The Phosphoserine intermediate role is filled by serine 62. Substrate contacts are provided by residues histidine 123, 153-154, arginine 185, arginine 191, 260-263, and lysine 335; these read RD and RPDR. The Mn(2+) site is built by aspartate 402, histidine 406, aspartate 443, histidine 444, and histidine 461.

This sequence belongs to the BPG-independent phosphoglycerate mutase family. In terms of assembly, monomer. Requires Mn(2+) as cofactor.

The enzyme catalyses (2R)-2-phosphoglycerate = (2R)-3-phosphoglycerate. Its pathway is carbohydrate degradation; glycolysis; pyruvate from D-glyceraldehyde 3-phosphate: step 3/5. Functionally, catalyzes the interconversion of 2-phosphoglycerate and 3-phosphoglycerate. The polypeptide is 2,3-bisphosphoglycerate-independent phosphoglycerate mutase (Listeria monocytogenes serotype 4b (strain F2365)).